Consider the following 223-residue polypeptide: MKFAVLVFPGSNCDRDMFNAAIKSGVEAEYVDYRETSLSGFDGVLIPGGFSFGDYLRSGAMASVAPIISEVKRLATEGKPVLGVCNGFQILTEIGLLPGALLHNDSHLFISRNEELEIVNNQTAFTNLYEQGEKVIYPVAHGEGHYYCTDEIYQQLKANNQIILKYVNNPNGSYDDIAGIVNEKGNVCGMMPHPERALETLLGTDSGVKLFEAMVKSWREQHV.

Positions 3–223 (FAVLVFPGSN…MVKSWREQHV (221 aa)) constitute a Glutamine amidotransferase type-1 domain. The active-site Nucleophile is the C85. Residues H193 and E195 contribute to the active site.

In terms of assembly, part of the FGAM synthase complex composed of 1 PurL, 1 PurQ and 2 PurS subunits.

It is found in the cytoplasm. It carries out the reaction N(2)-formyl-N(1)-(5-phospho-beta-D-ribosyl)glycinamide + L-glutamine + ATP + H2O = 2-formamido-N(1)-(5-O-phospho-beta-D-ribosyl)acetamidine + L-glutamate + ADP + phosphate + H(+). The enzyme catalyses L-glutamine + H2O = L-glutamate + NH4(+). Its pathway is purine metabolism; IMP biosynthesis via de novo pathway; 5-amino-1-(5-phospho-D-ribosyl)imidazole from N(2)-formyl-N(1)-(5-phospho-D-ribosyl)glycinamide: step 1/2. Part of the phosphoribosylformylglycinamidine synthase complex involved in the purines biosynthetic pathway. Catalyzes the ATP-dependent conversion of formylglycinamide ribonucleotide (FGAR) and glutamine to yield formylglycinamidine ribonucleotide (FGAM) and glutamate. The FGAM synthase complex is composed of three subunits. PurQ produces an ammonia molecule by converting glutamine to glutamate. PurL transfers the ammonia molecule to FGAR to form FGAM in an ATP-dependent manner. PurS interacts with PurQ and PurL and is thought to assist in the transfer of the ammonia molecule from PurQ to PurL. This chain is Phosphoribosylformylglycinamidine synthase subunit PurQ, found in Staphylococcus aureus (strain Mu50 / ATCC 700699).